The following is a 481-amino-acid chain: Cholesterol 16,22-dihydroxylase CYP90G4 (481 aa).

Residues 4-24 (SYLSFFVLSSILVLTLIFFFM) form a helical membrane-spanning segment. A heme-binding site is contributed by C426.

Belongs to the cytochrome P450 family. In terms of tissue distribution, mainly expressed in leaves and seed pods and, at low levels, in flowers and stems.

It is found in the membrane. It participates in steroid metabolism; cholesterol metabolism. Functionally, involved in the biosynthesis of spiroketal steroid and saponin natural products from cholesterol such as diosgenin and analogs (e.g. furostanol and spirostanol), plant defense compounds used as main precursors for the industrial production of steroid hormones. During the 5,6-spiroketalization of cholesterol, catalyzes the hydroxylation of cholesterol to form 16S,22S-dihydroxycholesterol and, possibly, the subsequent conversion of 16S,22S-dihydroxycholesterol into 16-oxo-22-hydroxy-cholesterol and 16-hydroxy-22-oxo-cholesterol. 16-hydroxy-22-oxo-cholesterol submit a spontaneous reaction leading to the production of furostanol-type steroid diastereomers, precursors of diosgenin. This Trigonella foenum-graecum (Fenugreek) protein is Cholesterol 16,22-dihydroxylase CYP90G4.